Reading from the N-terminus, the 403-residue chain is Anti-sigma-I factor RsgI8 (403 aa).

Residues 1 to 59 (MTKQKGTILKLKNNLAIIMTSDCKIVSIKRQPGMYEGLEISFNKNEIINKKNKLAFYSR) lie on the Cytoplasmic side of the membrane. The RsgI N-terminal anti-sigma domain maps to 4-51 (QKGTILKLKNNLAIIMTSDCKIVSIKRQPGMYEGLEISFNKNEIINKK). A helical transmembrane segment spans residues 60-80 (IAAGIAAIFIIMVISFNLFNN). At 81 to 403 (NDVYAYVAID…KAKNSIEKMP (323 aa)) the chain is on the extracellular side. 3 stretches are compositionally biased toward basic and acidic residues: residues 254 to 314 (VHNV…EPAK), 324 to 335 (LPKDKTIPEEKT), and 349 to 403 (VEPK…EKMP). The tract at residues 254–403 (VHNVKKEEPK…KAKNSIEKMP (150 aa)) is disordered.

Interacts (via RsgI N-terminal anti-sigma domain) with SigI8.

The protein localises to the cell membrane. Functionally, anti-sigma factor for SigI8. Negatively regulates SigI8 activity through direct interaction. The polypeptide is Anti-sigma-I factor RsgI8 (Acetivibrio thermocellus (strain ATCC 27405 / DSM 1237 / JCM 9322 / NBRC 103400 / NCIMB 10682 / NRRL B-4536 / VPI 7372) (Clostridium thermocellum)).